A 332-amino-acid polypeptide reads, in one-letter code: GTP cyclohydrolase-2 (332 aa).

Disordered stretches follow at residues 1–20 and 25–46; these read MASK…SETH and PLLS…IPPE. Residues 29–41 are compositionally biased toward polar residues; that stretch reads PTLTPSHIPSQTP. 171 to 175 contacts GTP; the sequence is RIHSE. 3 residues coordinate Zn(2+): Cys-176, Cys-187, and Cys-189. GTP contacts are provided by residues Gln-192, 214-216, and Thr-236; that span reads EGR. Catalysis depends on Asp-248, which acts as the Proton acceptor. Arg-250 serves as the catalytic Nucleophile. Residues Thr-271 and Lys-276 each coordinate GTP.

It belongs to the GTP cyclohydrolase II family. Zn(2+) is required as a cofactor.

It catalyses the reaction GTP + 4 H2O = 2,5-diamino-6-hydroxy-4-(5-phosphoribosylamino)-pyrimidine + formate + 2 phosphate + 3 H(+). The protein operates within cofactor biosynthesis; riboflavin biosynthesis; 5-amino-6-(D-ribitylamino)uracil from GTP: step 1/4. Functionally, catalyzes the conversion of GTP to 2,5-diamino-6-ribosylamino-4(3H)-pyrimidinone 5'-phosphate (DARP), formate and pyrophosphate. The sequence is that of GTP cyclohydrolase-2 (RIB1) from Meyerozyma guilliermondii (strain ATCC 6260 / CBS 566 / DSM 6381 / JCM 1539 / NBRC 10279 / NRRL Y-324) (Yeast).